The sequence spans 446 residues: Phosphoglucosamine mutase (446 aa).

Ser-102 acts as the Phosphoserine intermediate in catalysis. Positions 102, 239, 241, and 243 each coordinate Mg(2+). Phosphoserine is present on Ser-102.

This sequence belongs to the phosphohexose mutase family. Mg(2+) is required as a cofactor. In terms of processing, activated by phosphorylation.

It carries out the reaction alpha-D-glucosamine 1-phosphate = D-glucosamine 6-phosphate. Its function is as follows. Catalyzes the conversion of glucosamine-6-phosphate to glucosamine-1-phosphate. This is Phosphoglucosamine mutase from Solibacter usitatus (strain Ellin6076).